A 736-amino-acid polypeptide reads, in one-letter code: Elongation factor 2 (736 aa).

The region spanning 19 to 262 (DQIRNIGIIA…MVIKFVPNPR (244 aa)) is the tr-type G domain. GTP contacts are provided by residues 28–35 (AHVDHGKT), 94–98 (DTPGH), and 148–151 (NKVD). Residue His-602 is modified to Diphthamide.

This sequence belongs to the TRAFAC class translation factor GTPase superfamily. Classic translation factor GTPase family. EF-G/EF-2 subfamily.

It localises to the cytoplasm. In terms of biological role, catalyzes the GTP-dependent ribosomal translocation step during translation elongation. During this step, the ribosome changes from the pre-translocational (PRE) to the post-translocational (POST) state as the newly formed A-site-bound peptidyl-tRNA and P-site-bound deacylated tRNA move to the P and E sites, respectively. Catalyzes the coordinated movement of the two tRNA molecules, the mRNA and conformational changes in the ribosome. The polypeptide is Elongation factor 2 (fusA) (Aeropyrum pernix (strain ATCC 700893 / DSM 11879 / JCM 9820 / NBRC 100138 / K1)).